A 241-amino-acid chain; its full sequence is Uridylate kinase (241 aa).

Residue 12 to 15 (KISG) participates in ATP binding. Residues 20–25 (GDKGNG) are involved in allosteric activation by GTP. A UMP-binding site is contributed by Gly-54. Residues Gly-55 and Arg-59 each coordinate ATP. Residues Asp-74 and 135 to 142 (TGNPYFST) contribute to the UMP site. Asn-163, Tyr-169, and Asp-172 together coordinate ATP.

The protein belongs to the UMP kinase family. In terms of assembly, homohexamer.

It is found in the cytoplasm. It catalyses the reaction UMP + ATP = UDP + ADP. It functions in the pathway pyrimidine metabolism; CTP biosynthesis via de novo pathway; UDP from UMP (UMPK route): step 1/1. With respect to regulation, allosterically activated by GTP. Inhibited by UTP. In terms of biological role, catalyzes the reversible phosphorylation of UMP to UDP. The polypeptide is Uridylate kinase (Lactobacillus acidophilus (strain ATCC 700396 / NCK56 / N2 / NCFM)).